Reading from the N-terminus, the 391-residue chain is Rhizopuspepsin-2 (391 aa).

A signal peptide spans 1–21 (MKLTLISSCVALAFMALATEA). Positions 22–68 (APSGKKLSIPLTKNTNYKPSAKNAIQKALAKYHRFRTTSSSNSTSTE) are cleaved as a propeptide — activation peptide. The Peptidase A1 domain occupies 84-388 (YYGKVTVGTP…NQEVPEVQIA (305 aa)). D102 is a catalytic residue. A disulfide bridge links C115 with C118. D285 is a catalytic residue. Cysteines 319 and 352 form a disulfide.

Belongs to the peptidase A1 family.

The catalysed reaction is Hydrolysis of proteins with broad specificity similar to that of pepsin A, preferring hydrophobic residues at P1 and P1'. Clots milk and activates trypsinogen. Does not cleave 4-Gln-|-His-5, but does cleave 10-His-|-Leu-11 and 12-Val-|-Glu-13 in B chain of insulin.. The sequence is that of Rhizopuspepsin-2 from Rhizopus niveus.